The chain runs to 293 residues: Elongation factor Ts (293 aa).

An involved in Mg(2+) ion dislocation from EF-Tu region spans residues 80–83 (TDFV).

It belongs to the EF-Ts family.

The protein localises to the cytoplasm. Its function is as follows. Associates with the EF-Tu.GDP complex and induces the exchange of GDP to GTP. It remains bound to the aminoacyl-tRNA.EF-Tu.GTP complex up to the GTP hydrolysis stage on the ribosome. This chain is Elongation factor Ts, found in Lacticaseibacillus casei (strain BL23) (Lactobacillus casei).